We begin with the raw amino-acid sequence, 1912 residues long: Chromodomain-helicase-DNA-binding protein 4 (1912 aa).

The interval 1–157 is disordered; the sequence is MASGLGSPSP…PKSSAQLLED (157 aa). A compositionally biased stretch (acidic residues) spans 35 to 45; the sequence is NEEDPEEDLSE. Position 44 is a phosphoserine (S44). The span at 113-131 shows a compositional bias: basic residues; that stretch reads GKKKKKKLGPKKEKKSKSK. K133 participates in a covalent cross-link: Glycyl lysine isopeptide (Lys-Gly) (interchain with G-Cter in SUMO2). A compositionally biased stretch (acidic residues) spans 135 to 145; sequence EEEEEDDDDDS. Residues K146, K179, and K297 each participate in a glycyl lysine isopeptide (Lys-Gly) (interchain with G-Cter in SUMO2) cross-link. The segment at 243–360 is disordered; that stretch reads ATEVAPPPPP…KKKKGEEEVT (118 aa). A KIKL motif is present at residues 295–298; that stretch reads KIKL. Phosphoserine is present on S303. A Glycyl lysine isopeptide (Lys-Gly) (interchain with G-Cter in SUMO2) cross-link involves residue K304. S308, S309, S310, and S319 each carry phosphoserine. The span at 311–323 shows a compositional bias: acidic residues; sequence EDDDLDVESDFDD. The segment covering 340 to 353 has biased composition (basic residues); the sequence is SRSRKKLRTTKKKK. At T367 the chain carries Phosphothreonine. The PHD-type 1 zinc-finger motif lies at 370-417; it reads QDYCEVCQQGGEIILCDTCPRAYHMVCLDPDMEKAPEGKWSCPHCEKE. Phosphoserine is present on S428. The PHD-type 2 zinc-finger motif lies at 449–496; sequence MEFCRVCKDGGELLCCDTCPSSYHIHCLNPPLPEIPNGEWLCPRCTCP. The 101-residue stretch at 494-594 folds into the Chromo 1 domain; the sequence is TCPALKGKVQ…SGDFGGDEEK (101 aa). 2 disordered regions span residues 510-537 and 578-603; these read WGQPPSPTPVPRPPDADPNTPSPKPLEG and NDMDEPPSGDFGGDEEKSRKRKNKDP. The segment covering 513–522 has biased composition (pro residues); it reads PPSPTPVPRP. S515 carries the phosphoserine modification. 2 positions are modified to phosphothreonine: T517 and T529. The residue at position 531 (S531) is a Phosphoserine. Residues K618 and K696 each participate in a glycyl lysine isopeptide (Lys-Gly) (interchain with G-Cter in SUMO2) cross-link. Positions 622 to 697 constitute a Chromo 2 domain; the sequence is MMIHRILNHS…KLKKVKLRKL (76 aa). T703 bears the Phosphothreonine mark. Residue K711 forms a Glycyl lysine isopeptide (Lys-Gly) (interchain with G-Cter in SUMO1); alternate linkage. Residue K711 forms a Glycyl lysine isopeptide (Lys-Gly) (interchain with G-Cter in SUMO2); alternate linkage. Residues 738 to 922 enclose the Helicase ATP-binding domain; that stretch reads RFSWAQGTDT…FHLLNFLTPE (185 aa). 751 to 758 serves as a coordination point for ATP; the sequence is DEMGLGKT. A DEAH box motif is present at residues 873–876; sequence DEAH. In terms of domain architecture, Helicase C-terminal spans 1054–1203; that stretch reads LLQKMLKNLK…LTHLVVRPGL (150 aa). S1209 carries the phosphoserine modification. Residues K1212, K1228, K1239, and K1304 each participate in a glycyl lysine isopeptide (Lys-Gly) (interchain with G-Cter in SUMO2) cross-link. Phosphoserine occurs at positions 1308, 1349, and 1370. 2 disordered regions span residues 1344-1401 and 1525-1562; these read NYND…KPLP and EENKKMSQPGSPSPKTPTPSTPGDTQPNTPAPVPPAED. Residues K1528 and K1529 each participate in a glycyl lysine isopeptide (Lys-Gly) (interchain with G-Cter in SUMO2) cross-link. 3 positions are modified to phosphoserine: S1531, S1535, and S1537. Pro residues predominate over residues 1535-1544; sequence SPSPKTPTPS. Phosphothreonine occurs at positions 1542, 1549, and 1553. K1565 participates in a covalent cross-link: Glycyl lysine isopeptide (Lys-Gly) (interchain with G-Cter in SUMO2). At S1570 the chain carries Phosphoserine. The span at 1570 to 1584 shows a compositional bias: basic and acidic residues; the sequence is SLKEEESIEGEKEVK. 2 disordered regions span residues 1570–1589 and 1594–1644; these read SLKEEESIEGEKEVKSTAPE and CTQA…VEKV. A Glycyl lysine isopeptide (Lys-Gly) (interchain with G-Cter in SUMO2) cross-link involves residue K1572. Phosphoserine is present on S1576. The tract at residues 1577-1912 is required for interaction with PCNT; that stretch reads IEGEKEVKST…PTPQQVAQQQ (336 aa). K1584 participates in a covalent cross-link: Glycyl lysine isopeptide (Lys-Gly) (interchain with G-Cter in SUMO2). A Phosphoserine modification is found at S1602. Over residues 1603-1644 the composition is skewed to basic and acidic residues; the sequence is EDEKVVVEPPEGEEKVEKAEVKERTEEPMETEPKGAADVEKV. Residues K1606, K1617, and K1636 each participate in a glycyl lysine isopeptide (Lys-Gly) (interchain with G-Cter in SUMO2) cross-link. Residue K1643 forms a Glycyl lysine isopeptide (Lys-Gly) (interchain with G-Cter in SUMO2); alternate linkage. K1643 is modified (N6-acetyllysine; alternate). Residue K1647 forms a Glycyl lysine isopeptide (Lys-Gly) (interchain with G-Cter in SUMO2) linkage. Phosphothreonine is present on T1653. Residues K1660 and K1670 each participate in a glycyl lysine isopeptide (Lys-Gly) (interchain with G-Cter in SUMO2) cross-link. T1679 is modified (phosphothreonine). Residues K1687 and K1865 each participate in a glycyl lysine isopeptide (Lys-Gly) (interchain with G-Cter in SUMO2) cross-link.

It belongs to the SNF2/RAD54 helicase family. Component of the nucleosome remodeling and deacetylase (NuRD) repressor complex, composed of core proteins MTA1, MTA2, MTA3, RBBP4, RBBP7, HDAC1, HDAC2, MBD2, MBD3, and peripherally associated proteins CDK2AP1, CDK2AP2, GATAD2A, GATAD2B, CHD3, CHD4 and CHD5. The exact stoichiometry of the NuRD complex is unknown, and some subunits such as MBD2 and MBD3, GATAD2A and GATAD2B, and CHD3, CHD4 and CHD5 define mutually exclusive NuRD complexes. Interacts with IKFZ1; the interaction is direct and when in part of the NuRD complex. Part of a complex containing ATR and HDAC2. Interacts with HDAC2; the interaction is direct. Interacts with the cohesin complex component RAD21; the interaction is direct. Interacts with the ISWI chromatin remodeling complex component SMARCA5; the interaction is direct. Interacts with ZGPAT; the interaction is direct. Interacts with ZMYND8; the interaction is direct, appears to occur with monomeric ZMYND8, and is increased following DNA damage. Interacts with BCL6. Interacts with BRD4. Interacts with CBX1. Interacts with CBX3. Interacts with CBX5. Interacts with GATAD2A. Interacts with HDAC1. Interacts with KLF1; the interaction depends on sumoylation of KLF1, and leads to its transcriptional repression. Interacts with MTA1. Interacts with PCNT. Interacts with RBBP7. Interacts with SETX. Interacts with TRIM27. Interacts with histone H3. Interacts with histone H4. Does not interact with PWWP2A. Does not interact with PWWP2B. Interacts (via KIKL motif) with BRD3 (via NET domain). Zn(2+) serves as cofactor. Widely expressed.

Its subcellular location is the nucleus. The protein resides in the cytoplasm. It is found in the cytoskeleton. The protein localises to the microtubule organizing center. It localises to the centrosome. It carries out the reaction ATP + H2O = ADP + phosphate + H(+). Its function is as follows. ATP-dependent chromatin-remodeling factor that binds and distorts nucleosomal DNA. Acts as a component of the histone deacetylase NuRD complex which participates in the remodeling of chromatin. Localizes to acetylated damaged chromatin in a ZMYND8-dependent manner, to promote transcriptional repression and double-strand break repair by homologous recombination. Involved in neurogenesis. This is Chromodomain-helicase-DNA-binding protein 4 (CHD4) from Homo sapiens (Human).